Here is a 329-residue protein sequence, read N- to C-terminus: Tetraacyldisaccharide 4'-kinase (329 aa).

Residue 58-65 (SVGGTGKT) participates in ATP binding.

It belongs to the LpxK family.

The enzyme catalyses a lipid A disaccharide + ATP = a lipid IVA + ADP + H(+). It functions in the pathway glycolipid biosynthesis; lipid IV(A) biosynthesis; lipid IV(A) from (3R)-3-hydroxytetradecanoyl-[acyl-carrier-protein] and UDP-N-acetyl-alpha-D-glucosamine: step 6/6. Its function is as follows. Transfers the gamma-phosphate of ATP to the 4'-position of a tetraacyldisaccharide 1-phosphate intermediate (termed DS-1-P) to form tetraacyldisaccharide 1,4'-bis-phosphate (lipid IVA). This Idiomarina loihiensis (strain ATCC BAA-735 / DSM 15497 / L2-TR) protein is Tetraacyldisaccharide 4'-kinase.